A 424-amino-acid chain; its full sequence is Glucose-1-phosphate adenylyltransferase (424 aa).

Residues Tyr-112, Gly-177, 192–193, and Ser-210 contribute to the alpha-D-glucose 1-phosphate site; that span reads EK.

The protein belongs to the bacterial/plant glucose-1-phosphate adenylyltransferase family. As to quaternary structure, homotetramer.

The catalysed reaction is alpha-D-glucose 1-phosphate + ATP + H(+) = ADP-alpha-D-glucose + diphosphate. It participates in glycan biosynthesis; glycogen biosynthesis. Its function is as follows. Involved in the biosynthesis of ADP-glucose, a building block required for the elongation reactions to produce glycogen. Catalyzes the reaction between ATP and alpha-D-glucose 1-phosphate (G1P) to produce pyrophosphate and ADP-Glc. The sequence is that of Glucose-1-phosphate adenylyltransferase from Methylococcus capsulatus (strain ATCC 33009 / NCIMB 11132 / Bath).